A 37-amino-acid chain; its full sequence is U1-theraphotoxin-Hs1b (37 aa).

Intrachain disulfides connect Cys4–Cys18, Cys8–Cys29, and Cys23–Cys34.

As to quaternary structure, form 1 and form 2 may dimerize. As to expression, expressed by the venom gland.

It is found in the secreted. In terms of biological role, lethal neurotoxin that blocks neuromuscular transmission. Acts cooperatively to potentiate the activity of huwentoxin-I. In Cyriopagopus schmidti (Chinese bird spider), this protein is U1-theraphotoxin-Hs1b.